The sequence spans 158 residues: 6,7-dimethyl-8-ribityllumazine synthase (158 aa).

5-amino-6-(D-ribitylamino)uracil contacts are provided by residues phenylalanine 23, 61–63 (SFE), and 85–87 (AVI). A (2S)-2-hydroxy-3-oxobutyl phosphate-binding site is contributed by 90–91 (DT). Catalysis depends on histidine 93, which acts as the Proton donor. Residue phenylalanine 118 participates in 5-amino-6-(D-ribitylamino)uracil binding. Arginine 132 serves as a coordination point for (2S)-2-hydroxy-3-oxobutyl phosphate.

This sequence belongs to the DMRL synthase family.

It catalyses the reaction (2S)-2-hydroxy-3-oxobutyl phosphate + 5-amino-6-(D-ribitylamino)uracil = 6,7-dimethyl-8-(1-D-ribityl)lumazine + phosphate + 2 H2O + H(+). The protein operates within cofactor biosynthesis; riboflavin biosynthesis; riboflavin from 2-hydroxy-3-oxobutyl phosphate and 5-amino-6-(D-ribitylamino)uracil: step 1/2. In terms of biological role, catalyzes the formation of 6,7-dimethyl-8-ribityllumazine by condensation of 5-amino-6-(D-ribitylamino)uracil with 3,4-dihydroxy-2-butanone 4-phosphate. This is the penultimate step in the biosynthesis of riboflavin. In Prochlorococcus marinus (strain NATL2A), this protein is 6,7-dimethyl-8-ribityllumazine synthase.